The chain runs to 602 residues: MREHLNCLHKKVQEFPTTSGCYKMYSQDNKILYIGKAKNLRSRLKNYFLEKISLKTKILMRNVVNIEVITTNSEYEALLLECNLIKEHKPDYNIKLKDDKGYPMIRITCEKYPKVFKTRKIINDGSEYFGPYVNAKHLDLVLNLINKTFKTRKCKKKSKNPCLYFHMGQCLGVCYRNDLEEQYKEEVNKIRHILNGNISKLLDEIEIKMKEVIKREDFESAIKLKETKRSLIEISQTQIITKINKLSTDYIYIHKTDNLNVIVIFKYKDGKLVEKDINFDESIYEEEELIAEFITQYYTSLNMIVPDKICIFKKIETEDITKLINELKSTNTEIVYEETKDAIKIMEMAISNAEIALKAYNNEKNKALENLKIILEMTKLPKTIEGFDIAHLNGYKTVASLVTFKMGKPFKDGYRVYKINSLNDGEINDFKAIKEIISRRYTKLINEQLELPTLILIDGGKGQLNAAYSILKGLKIEDKVTICALAKQEETIFLPNKTQGIKLPKGNPALKILQNVRDESHRKANSFNRKLRKNIKLNYSKIEGIGEKKAKNILKTLGTYKDIFLLNEDEIAQKMKINIKMAKKIKKFSEDQNLKNTHSIES.

Residues 17 to 94 (TTSGCYKMYS…IKEHKPDYNI (78 aa)) enclose the GIY-YIG domain. One can recognise a UVR domain in the interval 199–234 (SKLLDEIEIKMKEVIKREDFESAIKLKETKRSLIEI).

It belongs to the UvrC family. Interacts with UvrB in an incision complex.

Its subcellular location is the cytoplasm. Functionally, the UvrABC repair system catalyzes the recognition and processing of DNA lesions. UvrC both incises the 5' and 3' sides of the lesion. The N-terminal half is responsible for the 3' incision and the C-terminal half is responsible for the 5' incision. This chain is UvrABC system protein C, found in Borrelia turicatae (strain 91E135).